The sequence spans 212 residues: Probable GTP-binding protein EngB (212 aa).

Positions 40–212 constitute an EngB-type G domain; sequence SLPEIAFVGK…KASLAKCIKA (173 aa). GTP is bound by residues 48–55, 75–79, 93–96, 160–163, and 191–193; these read GKSNVGKS, GRTRQ, DLPG, TKSD, and VSS. Positions 55 and 77 each coordinate Mg(2+).

It belongs to the TRAFAC class TrmE-Era-EngA-EngB-Septin-like GTPase superfamily. EngB GTPase family. The cofactor is Mg(2+).

Functionally, necessary for normal cell division and for the maintenance of normal septation. In Rickettsia akari (strain Hartford), this protein is Probable GTP-binding protein EngB.